A 119-amino-acid chain; its full sequence is MPRVKGGTVTRRRRKKVLKLAKGYFGAKHALYRVANQQVMKSLMYAYRDRRQRKRDFRKLWIARINAAARMHGLSYSRFMHGLKLAGVEVNRKMLADLAVNDQAAFAQLADLAKANLNK.

This sequence belongs to the bacterial ribosomal protein bL20 family.

In terms of biological role, binds directly to 23S ribosomal RNA and is necessary for the in vitro assembly process of the 50S ribosomal subunit. It is not involved in the protein synthesizing functions of that subunit. This is Large ribosomal subunit protein bL20 from Geobacillus sp. (strain WCH70).